The sequence spans 505 residues: ATP nucleosidase Cap17 (505 aa).

The segment at 1–229 (MTNTNNEYVL…RLSEIAVELL (229 aa)) is cyclic oligonucleotide sensing-domain. Residues 239-505 (LHTPSVLILT…DYLQHGWIRA (267 aa)) form a purine nucleoside phosphorylase domain region.

Belongs to the Cap17 family.

It catalyses the reaction ATP + H2O = D-ribose 5-triphosphate + adenine. It carries out the reaction dATP + H2O = 2-deoxyribose 5-triphosphate + adenine. Effector protein with (d)ATP degrading activity of a CBASS antivirus system. CBASS (cyclic oligonucleotide-based antiphage signaling system) provides immunity against bacteriophage. A CD-NTase protein synthesizes cyclic nucleotides in response to infection; these serve as specific second messenger signals. The signals activate a diverse range of effectors, leading to bacterial cell death and thus abortive phage infection. A type III CBASS system. Expression of this CBASS system (Cap18-Cap6-Cap7-CdnC-CapW-Cap17) in a susceptible E.coli (strain MG1655) confers resistance to bacteriophage P1, leading to cell lysis. By 50 minutes post-infection, ATP levels are markedly reduced while dATP has been eliminated. The C-terminal purine nucleoside phosphorylase (PNP) domain cleaves the N-glycosidic bond of (d)ATP to release adenine and a sugar triphosphate; has no activity on other (d)NTPs, nor on DNA or RNA. In vivo during phage infection has pleoitropic effects on nucleotide accumulation. This protein may be activated by the cognate CD-NTase (CdnC). The protein is ATP nucleosidase Cap17 of Escherichia coli (strain KTE188).